A 984-amino-acid polypeptide reads, in one-letter code: Probable beta-galactosidase C (984 aa).

Positions 1-19 (MRLLNIFTTLCLLLWSGAA) are cleaved as a signal peptide. Substrate is bound by residues Tyr78, Asn123, Ala124, Glu125, and Asn183. The Proton donor role is filled by Glu184. Substrate is bound at residue Tyr247. A disulfide bridge links Cys253 with Cys300. A glycan (N-linked (GlcNAc...) asparagine) is linked at Asn272. Catalysis depends on Glu283, which acts as the Nucleophile. A substrate-binding site is contributed by Tyr349. Residues Asn387, Asn433, Asn462, Asn516, Asn583, Asn599, Asn673, Asn716, Asn756, Asn860, and Asn870 are each glycosylated (N-linked (GlcNAc...) asparagine).

This sequence belongs to the glycosyl hydrolase 35 family.

It localises to the secreted. The catalysed reaction is Hydrolysis of terminal non-reducing beta-D-galactose residues in beta-D-galactosides.. Its function is as follows. Cleaves beta-linked terminal galactosyl residues from gangliosides, glycoproteins, and glycosaminoglycans. In Sclerotinia sclerotiorum (strain ATCC 18683 / 1980 / Ss-1) (White mold), this protein is Probable beta-galactosidase C (lacC).